Here is a 181-residue protein sequence, read N- to C-terminus: DNA-packaging protein NU1 homolog (181 aa).

This sequence to phage lambda DNA packaging protein NU1.

This Escherichia coli (strain K12) protein is DNA-packaging protein NU1 homolog (nohD).